The following is a 158-amino-acid chain: Large ribosomal subunit protein eL20z (158 aa).

This sequence belongs to the eukaryotic ribosomal protein eL20 family.

This is Large ribosomal subunit protein eL20z (RPL18A1) from Arabidopsis thaliana (Mouse-ear cress).